A 105-amino-acid chain; its full sequence is BLOC-1-related complex subunit 7 (105 aa).

This sequence belongs to the BORCS7 family. Component of the BLOC-one-related complex (BORC) which is composed of BLOC1S1, BLOC1S2, BORCS5, BORCS6, BORCS7, BORCS8, KXD1 and SNAPIN.

The protein localises to the lysosome membrane. In terms of biological role, as part of the BORC complex may play a role in lysosomes movement and localization at the cell periphery. Associated with the cytosolic face of lysosomes, the BORC complex may recruit ARL8B and couple lysosomes to microtubule plus-end-directed kinesin motor. In Mus musculus (Mouse), this protein is BLOC-1-related complex subunit 7.